The chain runs to 173 residues: dCTP deaminase, dUMP-forming (173 aa).

Residues R93–R98, D111, T119–E121, Q138, and Y151 each bind dCTP. E121 functions as the Proton donor/acceptor in the catalytic mechanism.

It belongs to the dCTP deaminase family. Homotrimer.

The enzyme catalyses dCTP + 2 H2O = dUMP + NH4(+) + diphosphate. Its pathway is pyrimidine metabolism; dUMP biosynthesis; dUMP from dCTP: step 1/1. In terms of biological role, bifunctional enzyme that catalyzes both the deamination of dCTP to dUTP and the hydrolysis of dUTP to dUMP without releasing the toxic dUTP intermediate. In Clostridium acetobutylicum (strain ATCC 824 / DSM 792 / JCM 1419 / IAM 19013 / LMG 5710 / NBRC 13948 / NRRL B-527 / VKM B-1787 / 2291 / W), this protein is dCTP deaminase, dUMP-forming.